Reading from the N-terminus, the 311-residue chain is Putative dihydroorotate dehydrogenase A (fumarate) (311 aa).

Residues Lys-45, 69–73 (NSMGL), and Asn-128 each bind substrate. Residue 45 to 46 (KT) coordinates FMN. Asn-128 contributes to the FMN binding site. Cys-131 acts as the Nucleophile in catalysis. 2 residues coordinate FMN: Lys-165 and Val-193. A substrate-binding site is contributed by 194 to 195 (NS). Residues Gly-220, 248–249 (GG), and 270–271 (GT) contribute to the FMN site.

Belongs to the dihydroorotate dehydrogenase family. Type 1 subfamily. In terms of assembly, homodimer. The cofactor is FMN.

The protein resides in the cytoplasm. The catalysed reaction is (S)-dihydroorotate + fumarate = orotate + succinate. It participates in pyrimidine metabolism; UMP biosynthesis via de novo pathway. Catalyzes the conversion of dihydroorotate to orotate with fumarate as the electron acceptor. The polypeptide is Putative dihydroorotate dehydrogenase A (fumarate) (pyrD) (Streptococcus equi subsp. equi (strain 4047)).